Here is a 328-residue protein sequence, read N- to C-terminus: Ketol-acid reductoisomerase (NADP(+)) (328 aa).

A KARI N-terminal Rossmann domain is found at 1–179; sequence MRVLYERDGD…GGGAAGIIET (179 aa). NADP(+)-binding positions include 24–27, R47, and S51; that span reads YGSQ. H106 is a catalytic residue. G132 lines the NADP(+) pocket. Residues 180-325 form the KARI C-terminal knotted domain; sequence TFVDETETDL…ARLRSRMTCA (146 aa). Mg(2+) contacts are provided by D188, E192, E224, and E228. Position 249 (S249) interacts with substrate.

Belongs to the ketol-acid reductoisomerase family. Mg(2+) is required as a cofactor.

It catalyses the reaction (2R)-2,3-dihydroxy-3-methylbutanoate + NADP(+) = (2S)-2-acetolactate + NADPH + H(+). The enzyme catalyses (2R,3R)-2,3-dihydroxy-3-methylpentanoate + NADP(+) = (S)-2-ethyl-2-hydroxy-3-oxobutanoate + NADPH + H(+). It participates in amino-acid biosynthesis; L-isoleucine biosynthesis; L-isoleucine from 2-oxobutanoate: step 2/4. The protein operates within amino-acid biosynthesis; L-valine biosynthesis; L-valine from pyruvate: step 2/4. Its function is as follows. Involved in the biosynthesis of branched-chain amino acids (BCAA). Catalyzes an alkyl-migration followed by a ketol-acid reduction of (S)-2-acetolactate (S2AL) to yield (R)-2,3-dihydroxy-isovalerate. In the isomerase reaction, S2AL is rearranged via a Mg-dependent methyl migration to produce 3-hydroxy-3-methyl-2-ketobutyrate (HMKB). In the reductase reaction, this 2-ketoacid undergoes a metal-dependent reduction by NADPH to yield (R)-2,3-dihydroxy-isovalerate. The chain is Ketol-acid reductoisomerase (NADP(+)) from Tremblaya princeps.